The chain runs to 160 residues: Lymphocyte antigen 96 (160 aa).

An N-terminal signal peptide occupies residues 1-16 (MLPFILFSTLLPLIFT). Disulfide bonds link C25–C51, C37–C148, and C95–C105. N-linked (GlcNAc...) asparagine glycans are attached at residues N26, N77, and N101. Residues 119–123 (FSFKG) are interaction with lipopolysaccharide. Residue N150 is glycosylated (N-linked (GlcNAc...) asparagine).

In terms of assembly, heterogeneous homomer formed from homodimers; disulfide-linked. Belongs to the lipopolysaccharide (LPS) receptor, a multi-protein complex containing at least CD14, LY96 and TLR4. Binds to the extracellular domains of TLR2 and TLR4. Ligand binding induces interaction with TLR4 and oligomerization of the complex. N-glycosylated.

It localises to the secreted. The protein resides in the extracellular space. In terms of biological role, binds bacterial lipopolysaccharide (LPS). Cooperates with TLR4 in the innate immune response to bacterial lipopolysaccharide (LPS), and with TLR2 in the response to cell wall components from Gram-positive and Gram-negative bacteria. Enhances TLR4-dependent activation of NF-kappa-B. Cells expressing both LY96 and TLR4, but not TLR4 alone, respond to LPS. This is Lymphocyte antigen 96 (LY96) from Cricetulus griseus (Chinese hamster).